Reading from the N-terminus, the 289-residue chain is Acetyl-coenzyme A carboxylase carboxyl transferase subunit beta 2 (289 aa).

The 265-residue stretch at 25-289 folds into the CoA carboxyltransferase N-terminal domain; sequence VWTKCPSCEQ…TNKSIQPEAE (265 aa). Zn(2+) is bound by residues C29, C32, C48, and C51. The segment at 29 to 51 adopts a C4-type zinc-finger fold; it reads CPSCEQVLYRIALKENLEVCPKC.

The protein belongs to the AccD/PCCB family. As to quaternary structure, acetyl-CoA carboxylase is a heterohexamer composed of biotin carboxyl carrier protein (AccB), biotin carboxylase (AccC) and two subunits each of ACCase subunit alpha (AccA) and ACCase subunit beta (AccD). It depends on Zn(2+) as a cofactor.

It is found in the cytoplasm. The catalysed reaction is N(6)-carboxybiotinyl-L-lysyl-[protein] + acetyl-CoA = N(6)-biotinyl-L-lysyl-[protein] + malonyl-CoA. The protein operates within lipid metabolism; malonyl-CoA biosynthesis; malonyl-CoA from acetyl-CoA: step 1/1. Its function is as follows. Component of the acetyl coenzyme A carboxylase (ACC) complex. Biotin carboxylase (BC) catalyzes the carboxylation of biotin on its carrier protein (BCCP) and then the CO(2) group is transferred by the transcarboxylase to acetyl-CoA to form malonyl-CoA. The chain is Acetyl-coenzyme A carboxylase carboxyl transferase subunit beta 2 from Vibrio campbellii (strain ATCC BAA-1116).